We begin with the raw amino-acid sequence, 459 residues long: Protein U54 (459 aa).

The signal sequence occupies residues 1-20 (MQPATLQWSSYVLQLRLTTA). N-linked (GlcNAc...) asparagine; by host glycosylation is found at Asn76, Asn100, Asn281, Asn321, and Asn452.

This sequence belongs to the herpesviridae UL82 family.

The protein is Protein U54 (U54) of Homo sapiens (Human).